We begin with the raw amino-acid sequence, 281 residues long: Ribosomal RNA small subunit methyltransferase A (281 aa).

Positions 24, 26, 51, 72, 96, and 123 each coordinate S-adenosyl-L-methionine.

The protein belongs to the class I-like SAM-binding methyltransferase superfamily. rRNA adenine N(6)-methyltransferase family. RsmA subfamily.

It localises to the cytoplasm. The enzyme catalyses adenosine(1518)/adenosine(1519) in 16S rRNA + 4 S-adenosyl-L-methionine = N(6)-dimethyladenosine(1518)/N(6)-dimethyladenosine(1519) in 16S rRNA + 4 S-adenosyl-L-homocysteine + 4 H(+). Specifically dimethylates two adjacent adenosines (A1518 and A1519) in the loop of a conserved hairpin near the 3'-end of 16S rRNA in the 30S particle. May play a critical role in biogenesis of 30S subunits. The chain is Ribosomal RNA small subunit methyltransferase A from Ureaplasma urealyticum serovar 10 (strain ATCC 33699 / Western).